Reading from the N-terminus, the 914-residue chain is MTDQRGPPPPHPQQANGYKKFPPHDNQYSGANNSQPNNHYNENLYSAREPHNNKQYQSKNGKYGTNKYNNRNNSQGNAQYYNNRFNNGYRLNNNDYNPAMLPGMQWPANYYAPQMYYIPQQMVPVASPPYTHQPLNTNPEPPSTPKTTKIEITTKTGERLNLKKFHEEKKASKGEEKNDGVEQKSKSGTPFEKEATPVLPANEAVKDTLTETSNEKSTSEAENTKRLFLEQVRLRKAAMERKKNGLISETEKKQETSNHDNTDTTKPNSVIESEPIKEAPKPTGEANEVVIDGKSGASVKTPQHVTGSVTKSVTFNEPENESSSQDVDELVKDDDTTEISDTTGGKTVNKSDDETINSVITTEENTVKETEPSTSDIEMPTVSQLLETLGKAQPISDIYEFAYPENVERPDIKYKKPSVKYTYGPTFLLQFKDKLKFRPDPAWVEAVSSKIVIPPHIARNKPKDSGRFGGDFRSPSMRGMDHTSSSRVSSKRRSKRMGDDRRSNRGYTSRKDREKAAEKAEEQAPKEEIAPLVPSANRWIPKSRVKKTEKKLAPDGKTELFDKEEVERKMKSLLNKLTLEMFDSISSEILDIANQSKWEDDGETLKIVIEQIFHKACDEPHWSSMYAQLCGKVVKDLDPNIKDKENEGKNGPKLVLHYLVARCHEEFEKGWADKLPAGEDGNPLEPEMMSDEYYIAAAAKRRGLGLVRFIGYLYCLNLLTGKMMFECFRRLMKDLNNDPSEETLESVIELLNTVGEQFEHDKFVTPQATLEGSVLLDNLFMLLQHIIDGGTISNRIKFKLIDVKELREIKHWNSAKKDAGPKTIQQIHQEEEQLRQKKNSQRSNSRFNNHNQSNSNRYSSNRRNMQNTQRDSFASTKTGSFRNNQRNARKVEEVSQAPRANMFDALMNNDGDSD.

Positions 1–12 (MTDQRGPPPPHP) are enriched in pro residues. Disordered stretches follow at residues 1–84 (MTDQ…YNNR), 128–205 (PPYT…NEAV), 240–351 (ERKK…VNKS), and 457–535 (IARN…LVPS). Residues 26–44 (NQYSGANNSQPNNHYNENL) show a composition bias toward polar residues. The segment covering 59 to 73 (KNGKYGTNKYNNRNN) has biased composition (low complexity). The residue at position 74 (S74) is a Phosphoserine. Low complexity predominate over residues 145–155 (PKTTKIEITTK). The segment covering 156-195 (TGERLNLKKFHEEKKASKGEEKNDGVEQKSKSGTPFEKEA) has biased composition (basic and acidic residues). T196 is subject to Phosphothreonine. The tract at residues 201–315 (ANEAVKDTLT…TGSVTKSVTF (115 aa)) is interaction with PAB1. The segment covering 240-263 (ERKKNGLISETEKKQETSNHDNTD) has biased composition (basic and acidic residues). Polar residues-rich tracts occupy residues 298-325 (SVKTPQHVTGSVTKSVTFNEPENESSSQ) and 339-348 (ISDTTGGKTV). The residue at position 301 (T301) is a Phosphothreonine. The segment covering 496-529 (RMGDDRRSNRGYTSRKDREKAAEKAEEQAPKEEI) has biased composition (basic and acidic residues). A Phosphoserine modification is found at S503. The 244-residue stretch at 567–810 (ERKMKSLLNK…IDVKELREIK (244 aa)) folds into the MIF4G domain. The tract at residues 833 to 914 (QLRQKKNSQR…ALMNNDGDSD (82 aa)) is disordered. The segment covering 841 to 867 (QRSNSRFNNHNQSNSNRYSSNRRNMQN) has biased composition (low complexity). Positions 868–886 (TQRDSFASTKTGSFRNNQR) are enriched in polar residues. A Phosphoserine modification is found at S913.

It belongs to the eukaryotic initiation factor 4G family. In terms of assembly, component of the eIF4F complex, which composition varies with external and internal environmental conditions. It is composed of at least eIF4A (TIF1/TIF2), eIF4E (TIF45) and eIF4G (TIF4631 or TIF4632). Interacts with PAT1 in a RNA-dependent manner.

It localises to the cytoplasm. In terms of biological role, component of the eIF4F complex, which interacts with the mRNA cap structure and serves as an initial point of assembly for the translation apparatus. Stimulates translation by interaction with polyadenylate-binding protein PAB1, bringing the 5'- and 3'-ends of the mRNA in proximity. The formation of this circular mRNP structure appears to be critical for the synergistic effects of the cap and the poly(A) tail in facilitating translation initiation, recycling of ribosomes, and mRNA stability. TIF4632 is probably essential when TIF4631 is missing. This is Eukaryotic initiation factor 4F subunit p130 from Saccharomyces cerevisiae (strain ATCC 204508 / S288c) (Baker's yeast).